The chain runs to 213 residues: Probable nicotinate-nucleotide adenylyltransferase (213 aa).

The protein belongs to the NadD family.

The catalysed reaction is nicotinate beta-D-ribonucleotide + ATP + H(+) = deamido-NAD(+) + diphosphate. It functions in the pathway cofactor biosynthesis; NAD(+) biosynthesis; deamido-NAD(+) from nicotinate D-ribonucleotide: step 1/1. Catalyzes the reversible adenylation of nicotinate mononucleotide (NaMN) to nicotinic acid adenine dinucleotide (NaAD). This chain is Probable nicotinate-nucleotide adenylyltransferase, found in Escherichia coli O45:K1 (strain S88 / ExPEC).